A 352-amino-acid polypeptide reads, in one-letter code: N-acetyl-gamma-glutamyl-phosphate reductase (352 aa).

The active site involves C156.

This sequence belongs to the NAGSA dehydrogenase family. Type 1 subfamily.

The protein localises to the cytoplasm. It catalyses the reaction N-acetyl-L-glutamate 5-semialdehyde + phosphate + NADP(+) = N-acetyl-L-glutamyl 5-phosphate + NADPH + H(+). It participates in amino-acid biosynthesis; L-arginine biosynthesis; N(2)-acetyl-L-ornithine from L-glutamate: step 3/4. Its function is as follows. Catalyzes the NADPH-dependent reduction of N-acetyl-5-glutamyl phosphate to yield N-acetyl-L-glutamate 5-semialdehyde. The chain is N-acetyl-gamma-glutamyl-phosphate reductase from Rhodospirillum rubrum (strain ATCC 11170 / ATH 1.1.1 / DSM 467 / LMG 4362 / NCIMB 8255 / S1).